The primary structure comprises 847 residues: Follistatin-related protein 5 (847 aa).

An N-terminal signal peptide occupies residues methionine 1–glycine 20. One can recognise a Kazal-like domain in the interval glutamate 81–phenylalanine 135. Disulfide bonds link cysteine 87-cysteine 119, cysteine 93-cysteine 112, and cysteine 101-cysteine 133. 2 consecutive EF-hand domains span residues arginine 175–asparagine 210 and lysine 211–glutamine 246. Aspartate 188, aspartate 190, asparagine 192, glutamate 199, aspartate 226, asparagine 228, aspartate 230, histidine 232, and glutamate 237 together coordinate Ca(2+). Ig-like domains lie at proline 250–asparagine 338 and proline 341–serine 426. 2 disulfide bridges follow: cysteine 270/cysteine 321 and cysteine 362/cysteine 413. N-linked (GlcNAc...) asparagine glycosylation is found at asparagine 318 and asparagine 394.

The protein resides in the secreted. The chain is Follistatin-related protein 5 (Fstl5) from Mus musculus (Mouse).